The following is a 393-amino-acid chain: NAD(P)H-quinone oxidoreductase subunit H, chloroplastic (393 aa).

This sequence belongs to the complex I 49 kDa subunit family. As to quaternary structure, NDH is composed of at least 16 different subunits, 5 of which are encoded in the nucleus.

The protein resides in the plastid. Its subcellular location is the chloroplast thylakoid membrane. The catalysed reaction is a plastoquinone + NADH + (n+1) H(+)(in) = a plastoquinol + NAD(+) + n H(+)(out). It catalyses the reaction a plastoquinone + NADPH + (n+1) H(+)(in) = a plastoquinol + NADP(+) + n H(+)(out). In terms of biological role, NDH shuttles electrons from NAD(P)H:plastoquinone, via FMN and iron-sulfur (Fe-S) centers, to quinones in the photosynthetic chain and possibly in a chloroplast respiratory chain. The immediate electron acceptor for the enzyme in this species is believed to be plastoquinone. Couples the redox reaction to proton translocation, and thus conserves the redox energy in a proton gradient. The sequence is that of NAD(P)H-quinone oxidoreductase subunit H, chloroplastic from Oryza nivara (Indian wild rice).